We begin with the raw amino-acid sequence, 415 residues long: Histidine--tRNA ligase (415 aa).

This sequence belongs to the class-II aminoacyl-tRNA synthetase family. Homodimer.

The protein resides in the cytoplasm. It catalyses the reaction tRNA(His) + L-histidine + ATP = L-histidyl-tRNA(His) + AMP + diphosphate + H(+). In Rickettsia felis (strain ATCC VR-1525 / URRWXCal2) (Rickettsia azadi), this protein is Histidine--tRNA ligase.